A 138-amino-acid polypeptide reads, in one-letter code: Small ribosomal subunit protein uS8 (138 aa).

This sequence belongs to the universal ribosomal protein uS8 family. Part of the 30S ribosomal subunit. Contacts proteins S5 and S12.

One of the primary rRNA binding proteins, it binds directly to 16S rRNA central domain where it helps coordinate assembly of the platform of the 30S subunit. This is Small ribosomal subunit protein uS8 (rpsH) from Thermus thermophilus (strain ATCC BAA-163 / DSM 7039 / HB27).